Consider the following 132-residue polypeptide: Fatty acid-binding protein 2 (132 aa).

Position 2 is an N-acetylserine (serine 2). Hexadecanoate is bound by residues glutamine 40 and arginine 128–tyrosine 130.

This sequence belongs to the calycin superfamily. Fatty-acid binding protein (FABP) family. In terms of assembly, monomer. In terms of tissue distribution, midgut.

The protein resides in the cytoplasm. Functionally, binds fatty acids in a 1:1 molar ratio. This is Fatty acid-binding protein 2 (MFB2) from Manduca sexta (Tobacco hawkmoth).